The chain runs to 108 residues: ATP synthase epsilon chain (108 aa).

This sequence belongs to the ATPase epsilon chain family. As to quaternary structure, F-type ATPases have 2 components, CF(1) - the catalytic core - and CF(0) - the membrane proton channel. CF(1) has five subunits: alpha(3), beta(3), gamma(1), delta(1), epsilon(1). CF(0) has three main subunits: a, b and c.

The protein resides in the cell inner membrane. In terms of biological role, produces ATP from ADP in the presence of a proton gradient across the membrane. The polypeptide is ATP synthase epsilon chain (Thermotoga maritima (strain ATCC 43589 / DSM 3109 / JCM 10099 / NBRC 100826 / MSB8)).